The primary structure comprises 348 residues: Haptoglobin-related protein (348 aa).

A signal peptide (not cleaved) is located at residues 1–18 (MSDLGAVISLLLWGRQLF). The Sushi domain maps to 34–87 (FPKPPEIANGYVEHLFRYQCKNYYRLRTEGDGVYTLNDKKQWINKAVGDKLPEC). The 243-residue stretch at 104-346 (ILGGHLDAKG…IQHWVQKTIA (243 aa)) folds into the Peptidase S1 domain. Intrachain disulfides connect C251-C282 and C293-C323.

It belongs to the peptidase S1 family. As to expression, in adult liver the amount of HPR mRNA is at the lower limit of detection, therefore the extent of its expression is at most less than 1000-fold that of the HP1F gene. No HPR mRNA can be detected in fetal liver. Expressed in Hep-G2 and leukemia MOLT-4 cell lines.

It localises to the secreted. In terms of biological role, primate-specific plasma protein associated with apolipoprotein L-I (apoL-I)-containing high-density lipoprotein (HDL). This HDL particle, termed trypanosome lytic factor-1 (TLF-1), mediates human innate immune protection against many species of African trypanosomes. Binds hemoglobin with high affinity and may contribute to the clearance of cell-free hemoglobin to allow hepatic recycling of heme iron. This is Haptoglobin-related protein (HPR) from Homo sapiens (Human).